The chain runs to 381 residues: 3-dehydroquinate synthase (381 aa).

NAD(+)-binding positions include 81-86, 115-119, 139-140, lysine 152, and lysine 161; these read EGESSK, GVIGD, and TS. Residues glutamate 194, histidine 256, and histidine 274 each contribute to the Zn(2+) site.

Belongs to the sugar phosphate cyclases superfamily. Dehydroquinate synthase family. It depends on Co(2+) as a cofactor. Zn(2+) is required as a cofactor. Requires NAD(+) as cofactor.

It is found in the cytoplasm. The enzyme catalyses 7-phospho-2-dehydro-3-deoxy-D-arabino-heptonate = 3-dehydroquinate + phosphate. It participates in metabolic intermediate biosynthesis; chorismate biosynthesis; chorismate from D-erythrose 4-phosphate and phosphoenolpyruvate: step 2/7. Functionally, catalyzes the conversion of 3-deoxy-D-arabino-heptulosonate 7-phosphate (DAHP) to dehydroquinate (DHQ). The chain is 3-dehydroquinate synthase from Rhodopseudomonas palustris (strain ATCC BAA-98 / CGA009).